Reading from the N-terminus, the 330-residue chain is Aspartate--ammonia ligase (330 aa).

Belongs to the class-II aminoacyl-tRNA synthetase family. AsnA subfamily.

It localises to the cytoplasm. It catalyses the reaction L-aspartate + NH4(+) + ATP = L-asparagine + AMP + diphosphate + H(+). It functions in the pathway amino-acid biosynthesis; L-asparagine biosynthesis; L-asparagine from L-aspartate (ammonia route): step 1/1. The polypeptide is Aspartate--ammonia ligase (Haemophilus ducreyi (strain 35000HP / ATCC 700724)).